Reading from the N-terminus, the 307-residue chain is Protein phosphatase PTC7 homolog fig (307 aa).

A PPM-type phosphatase domain is found at 41-300 (VQGSSKDQQL…DDITVILASV (260 aa)). Mn(2+) is bound by residues Asp-77, Gly-78, and Asp-222.

Belongs to the PP2C family. Mg(2+) serves as cofactor. It depends on Mn(2+) as a cofactor.

It catalyses the reaction O-phospho-L-seryl-[protein] + H2O = L-seryl-[protein] + phosphate. It carries out the reaction O-phospho-L-threonyl-[protein] + H2O = L-threonyl-[protein] + phosphate. The sequence is that of Protein phosphatase PTC7 homolog fig from Drosophila grimshawi (Hawaiian fruit fly).